The sequence spans 127 residues: Small ribosomal subunit protein uS13 (127 aa).

Positions 97-127 (PVRGQRTRTNARTRRGGRKTVAGKKKAAAKK) are disordered. Positions 101–127 (QRTRTNARTRRGGRKTVAGKKKAAAKK) are enriched in basic residues.

The protein belongs to the universal ribosomal protein uS13 family. Part of the 30S ribosomal subunit. Forms a loose heterodimer with protein S19. Forms two bridges to the 50S subunit in the 70S ribosome.

Its function is as follows. Located at the top of the head of the 30S subunit, it contacts several helices of the 16S rRNA. In the 70S ribosome it contacts the 23S rRNA (bridge B1a) and protein L5 of the 50S subunit (bridge B1b), connecting the 2 subunits; these bridges are implicated in subunit movement. Contacts the tRNAs in the A and P-sites. The sequence is that of Small ribosomal subunit protein uS13 from Gloeobacter violaceus (strain ATCC 29082 / PCC 7421).